Here is a 98-residue protein sequence, read N- to C-terminus: Keratin-associated protein 3-1 (98 aa).

A2 carries the N-acetylalanine modification. A run of 4 repeats spans residues C3–R7, C8–R12, F47–S51, and Y55–D59. The tract at residues C3–D59 is 4 X 5 AA repeats of C-C-X(3).

The protein belongs to the KRTAP type 3 family. Interacts with wool keratins. As to expression, wool.

Its function is as follows. In the wool cortex, wool keratin intermediate filaments are embedded in an interfilamentous matrix, consisting of hair keratin-associated proteins (KRTAP), which are essential for the formation of a rigid and resistant wool shaft through their extensive disulfide bond cross-linking with abundant cysteine residues of wool keratins. The matrix proteins include the high-sulfur and high-glycine-tyrosine keratins. The sequence is that of Keratin-associated protein 3-1 (KRTAP3-1) from Capra hircus (Goat).